A 329-amino-acid polypeptide reads, in one-letter code: MARRYLLEFEKPLVELEKQIEQIRELARDSEVDVSQQLLQLETLAARRREEIFSALTPAEKIQVARHPQRPSTLDFIQMFCEDWIELHGDRNCSDDSALIGGIARIEDIPVLLIGQQKGRDTKENVARNFGMAKPSGYRKALRLMNHADKFNLPIISFIDTPGAYAGLLAEEQGQGEAIAVNLREMFRIKVPIIATVIGEGGSGGALGIGVADRLLMFEHSVYTVASPEACASILWRDAAKAPDAAAALKITGSDLLTLGIVDEVIKEPAGGNNWAPLQAGEALKTSILRHLTELSTLSEHKLRDNRYKKFRQIGSFLELSSQEEQLIT.

A CoA carboxyltransferase C-terminal domain is found at Gln40–Glu294.

The protein belongs to the AccA family. Acetyl-CoA carboxylase is a heterohexamer composed of biotin carboxyl carrier protein (AccB), biotin carboxylase (AccC) and two subunits each of ACCase subunit alpha (AccA) and ACCase subunit beta (AccD).

It localises to the cytoplasm. It carries out the reaction N(6)-carboxybiotinyl-L-lysyl-[protein] + acetyl-CoA = N(6)-biotinyl-L-lysyl-[protein] + malonyl-CoA. It participates in lipid metabolism; malonyl-CoA biosynthesis; malonyl-CoA from acetyl-CoA: step 1/1. Functionally, component of the acetyl coenzyme A carboxylase (ACC) complex. First, biotin carboxylase catalyzes the carboxylation of biotin on its carrier protein (BCCP) and then the CO(2) group is transferred by the carboxyltransferase to acetyl-CoA to form malonyl-CoA. This Prochlorococcus marinus (strain SARG / CCMP1375 / SS120) protein is Acetyl-coenzyme A carboxylase carboxyl transferase subunit alpha.